Consider the following 188-residue polypeptide: Elongation factor P-like protein (188 aa).

The protein belongs to the elongation factor P family.

The chain is Elongation factor P-like protein from Xanthomonas axonopodis pv. citri (strain 306).